A 179-amino-acid polypeptide reads, in one-letter code: Large ribosomal subunit protein uL5 (179 aa).

It belongs to the universal ribosomal protein uL5 family. As to quaternary structure, part of the 50S ribosomal subunit; part of the 5S rRNA/L5/L18/L25 subcomplex. Contacts the 5S rRNA and the P site tRNA. Forms a bridge to the 30S subunit in the 70S ribosome.

Its function is as follows. This is one of the proteins that bind and probably mediate the attachment of the 5S RNA into the large ribosomal subunit, where it forms part of the central protuberance. In the 70S ribosome it contacts protein S13 of the 30S subunit (bridge B1b), connecting the 2 subunits; this bridge is implicated in subunit movement. Contacts the P site tRNA; the 5S rRNA and some of its associated proteins might help stabilize positioning of ribosome-bound tRNAs. In Prochlorococcus marinus (strain MIT 9313), this protein is Large ribosomal subunit protein uL5.